The primary structure comprises 371 residues: Histidinol-phosphate aminotransferase (371 aa).

K221 is subject to N6-(pyridoxal phosphate)lysine.

This sequence belongs to the class-II pyridoxal-phosphate-dependent aminotransferase family. Histidinol-phosphate aminotransferase subfamily. In terms of assembly, homodimer. Requires pyridoxal 5'-phosphate as cofactor.

The catalysed reaction is L-histidinol phosphate + 2-oxoglutarate = 3-(imidazol-4-yl)-2-oxopropyl phosphate + L-glutamate. Its pathway is amino-acid biosynthesis; L-histidine biosynthesis; L-histidine from 5-phospho-alpha-D-ribose 1-diphosphate: step 7/9. This is Histidinol-phosphate aminotransferase from Pseudoalteromonas atlantica (strain T6c / ATCC BAA-1087).